The following is a 142-amino-acid chain: Hemoglobin subunit alpha (142 aa).

Residues 2 to 142 enclose the Globin domain; sequence VLSPDDKKHV…VSTVLTSKYR (141 aa). Phosphoserine is present on S4. N6-succinyllysine occurs at positions 8 and 12. K17 is modified (N6-acetyllysine; alternate). K17 is modified (N6-succinyllysine; alternate). Y25 is subject to Phosphotyrosine. S36 carries the post-translational modification Phosphoserine. K41 carries the post-translational modification N6-succinyllysine. Phosphoserine is present on S50. O2 is bound at residue H59. A heme b-binding site is contributed by H88. S103 carries the phosphoserine modification. T109 carries the phosphothreonine modification. A phosphoserine mark is found at S125 and S132. Phosphothreonine occurs at positions 135 and 138. Residue S139 is modified to Phosphoserine.

It belongs to the globin family. As to quaternary structure, heterotetramer of two alpha chains and two beta chains. Red blood cells.

Functionally, involved in oxygen transport from the lung to the various peripheral tissues. Its function is as follows. Hemopressin acts as an antagonist peptide of the cannabinoid receptor CNR1. Hemopressin-binding efficiently blocks cannabinoid receptor CNR1 and subsequent signaling. In Papio anubis (Olive baboon), this protein is Hemoglobin subunit alpha (HBA).